A 203-amino-acid polypeptide reads, in one-letter code: E3 ubiquitin-protein ligase rnf152-B (203 aa).

An RING-type zinc finger spans residues 12-55; sequence CQICFNYYSPRRRPKLLDCKHTCCSVCLQQMRASQKDLRCPWCR. A helical membrane pass occupies residues 167-187; it reads SGVCTVILVACVLVFLLGIVL.

Belongs to the RNF152 family.

The protein localises to the lysosome membrane. It carries out the reaction S-ubiquitinyl-[E2 ubiquitin-conjugating enzyme]-L-cysteine + [acceptor protein]-L-lysine = [E2 ubiquitin-conjugating enzyme]-L-cysteine + N(6)-ubiquitinyl-[acceptor protein]-L-lysine.. Its pathway is protein modification; protein ubiquitination. Its function is as follows. E3 ubiquitin-protein ligase that acts as a negative regulator of mTORC1 signaling by mediating ubiquitination of RagA/RRAGA and RHEB. Catalyzes 'Lys-63'-linked polyubiquitination of RagA/RRAGA in response to amino acid starvation, thereby regulating mTORC1 signaling. Also mediates monoubiquitination of RHEB, promoting its association with the TSC-TBC complex and subsequent inhibition. Also mediates 'Lys-48'-linked polyubiquitination of target proteins and their subsequent targeting to the proteasome for degradation. This chain is E3 ubiquitin-protein ligase rnf152-B, found in Xenopus laevis (African clawed frog).